The chain runs to 582 residues: NudC domain-containing protein 1 (582 aa).

Ser-7 carries the post-translational modification Phosphoserine. Residues Lys-272–Val-360 form the CS domain. Ser-387 is modified (phosphoserine).

It localises to the cytoplasm. The protein resides in the nucleus. The polypeptide is NudC domain-containing protein 1 (Mus musculus (Mouse)).